The chain runs to 378 residues: Spermidine/putrescine import ATP-binding protein PotA (378 aa).

One can recognise an ABC transporter domain in the interval 18 to 248; it reads VQLAGIRKCF…PKNLFVAGFI (231 aa). ATP is bound at residue 50–57; sequence GPSGCGKT.

Belongs to the ABC transporter superfamily. Spermidine/putrescine importer (TC 3.A.1.11.1) family. The complex is composed of two ATP-binding proteins (PotA), two transmembrane proteins (PotB and PotC) and a solute-binding protein (PotD).

It is found in the cell inner membrane. The enzyme catalyses ATP + H2O + polyamine-[polyamine-binding protein]Side 1 = ADP + phosphate + polyamineSide 2 + [polyamine-binding protein]Side 1.. Functionally, part of the ABC transporter complex PotABCD involved in spermidine/putrescine import. Responsible for energy coupling to the transport system. The sequence is that of Spermidine/putrescine import ATP-binding protein PotA from Shigella dysenteriae serotype 1 (strain Sd197).